A 402-amino-acid chain; its full sequence is Serine/threonine-protein kinase US3 homolog (402 aa).

Disordered stretches follow at residues 1–21 (MSST…KVHD) and 46–88 (FPDS…SPET). A Protein kinase domain is found at 102–386 (YNIVSSLPPG…AQDILMLPLF (285 aa)). Residues 110–118 (PGSEGYIYV) and Lys127 each bind ATP. Asp218 acts as the Proton acceptor in catalysis.

The protein belongs to the protein kinase superfamily. Ser/Thr protein kinase family. Post-translationally, phosphorylated by UL13 homolog; this phosphorylation regulates subsequent phosphorylation of UL31 and UL34 homologs by US3. Autophosphorylated.

It localises to the host cytoplasm. The protein resides in the host nucleus. The catalysed reaction is L-seryl-[protein] + ATP = O-phospho-L-seryl-[protein] + ADP + H(+). It catalyses the reaction L-threonyl-[protein] + ATP = O-phospho-L-threonyl-[protein] + ADP + H(+). Its function is as follows. Multifunctional serine/threonine kinase that plays a role in several processes including egress of virus particles from the nucleus, modulation of the actin cytoskeleton and inhibition of apoptosis. Phosphorylates UL31 and UL34 homologs, two critical regulators of capsid budding from nucleus to endoplasmic reticulum, thereby facilitating virion egress. Modulates and redistributes host components of the nuclear envelope, including LMNA, emerin/EMD and the nuclear matrix protein MATR3. Phosphorylates envelope glycoprotein B (gB), probably to direct it to the cell surface. Promotes virus intracellular spread by restructuring host cell cytoskeleton. Blocks host apoptosis to extend cell survival and allow efficient viral replication. Promotes viral gene expression by phosphorylating host HDAC2 to reduce viral genome silencing. This is Serine/threonine-protein kinase US3 homolog (US1206) from Gallid herpesvirus 2 (strain GA) (GaHV-2).